The following is a 242-amino-acid chain: Ubiquinone biosynthesis O-methyltransferase (242 aa).

R44, G64, D85, and M129 together coordinate S-adenosyl-L-methionine.

The protein belongs to the methyltransferase superfamily. UbiG/COQ3 family.

The catalysed reaction is a 3-demethylubiquinol + S-adenosyl-L-methionine = a ubiquinol + S-adenosyl-L-homocysteine + H(+). It carries out the reaction a 3-(all-trans-polyprenyl)benzene-1,2-diol + S-adenosyl-L-methionine = a 2-methoxy-6-(all-trans-polyprenyl)phenol + S-adenosyl-L-homocysteine + H(+). Its pathway is cofactor biosynthesis; ubiquinone biosynthesis. In terms of biological role, O-methyltransferase that catalyzes the 2 O-methylation steps in the ubiquinone biosynthetic pathway. The sequence is that of Ubiquinone biosynthesis O-methyltransferase from Yersinia pseudotuberculosis serotype O:1b (strain IP 31758).